We begin with the raw amino-acid sequence, 328 residues long: Naphthalene 1,2-dioxygenase system ferredoxin--NAD(P)(+), reductase component (328 aa).

The 2Fe-2S ferredoxin-type domain occupies 1–89 (MELLIQPNNR…NCAIEVPEAD (89 aa)). C35, C40, C43, and C73 together coordinate [2Fe-2S] cluster. The FAD-binding FR-type domain occupies 96–193 (ARIIKGTVVA…SGPLGTAYLR (98 aa)).

Belongs to the bacterial ring-hydroxylating dioxygenase ferredoxin reductase component family. In terms of assembly, the naphthalene dioxygenase (NDO) multicomponent enzyme system is composed of an electron transfer component and a dioxygenase component (iron sulfur protein (ISP)). The electron transfer component is composed of a ferredoxin reductase (NdoR) and a ferredoxin (NdoA), and the dioxygenase component is formed of a heterohexamer (trimer of heterodimers) of three large alpha subunits (NdoB) and three small beta subunits (NdoC). [2Fe-2S] cluster is required as a cofactor. FAD serves as cofactor.

The enzyme catalyses 2 reduced [2Fe-2S]-[ferredoxin] + NAD(+) + H(+) = 2 oxidized [2Fe-2S]-[ferredoxin] + NADH. It carries out the reaction 2 reduced [2Fe-2S]-[ferredoxin] + NADP(+) + H(+) = 2 oxidized [2Fe-2S]-[ferredoxin] + NADPH. It functions in the pathway aromatic compound metabolism; naphthalene degradation. With respect to regulation, strongly inhibited by p-chloromercuribenzoate. Also inhibited by N-ethylmaleimide and o-phenanthroline. In terms of biological role, component of the naphthalene dioxygenase (NDO) multicomponent enzyme system which catalyzes the incorporation of both atoms of molecular oxygen into naphthalene to form cis-(1R,2S)-dihydroxy-1,2-dihydronaphthalene. Ferredoxin reductase catalyzes the transfer of electrons from NADH to ferredoxin (NdoA). NADPH is also effective but yields only 39% of the activity obtained with NADH. Also able to catalyze the cis-dihydroxylation of biphenyl and phenanthrene. The protein is Naphthalene 1,2-dioxygenase system ferredoxin--NAD(P)(+), reductase component (ndoR) of Pseudomonas putida (Arthrobacter siderocapsulatus).